A 196-amino-acid polypeptide reads, in one-letter code: Probable GTP-binding protein EngB (196 aa).

The region spanning Ser-22–Glu-193 is the EngB-type G domain. Residues Gly-30–Ser-37, Gly-57–Leu-61, Asp-75–Gly-78, Thr-142–Asp-145, and Phe-172–Ala-174 contribute to the GTP site. Ser-37 and Thr-59 together coordinate Mg(2+).

Belongs to the TRAFAC class TrmE-Era-EngA-EngB-Septin-like GTPase superfamily. EngB GTPase family. The cofactor is Mg(2+).

Its function is as follows. Necessary for normal cell division and for the maintenance of normal septation. The chain is Probable GTP-binding protein EngB from Syntrophus aciditrophicus (strain SB).